The chain runs to 665 residues: MSGGGGDDVVCTGWLRKSPPEKKLRRYAWKKRWFILRSGRMSGDPDVLEYYKNEHSKKPLRIINLNFCEQVDAGLTFNKKELQDSFVFDIKTSERTFYLVAETEADMNKWVQSICQICGFNQAEESTDSLRNLSSASHGPRSSPAEFSSSQHLLRERKSSAPSHSSQPTLFTFEPPMTSHMQPALSTSAPQEYLYLHQCISRRTENSRSASFSQGTRQKSDTAVQKLAQSNGHCINGVSNQVHGFYSLPKPSRHNTEFKDSTYDLPRSLASHGHTKSSLTGSETDNEDVYTFKMPSNTLCREFGDLLVDNMDVPTTPLSAYQIPRTFTLDKNHNAMTVATSGDSAIAPPPRPPKPSQAETPRWGSPQQKPPIGENSRSVAATIPRRNTLPAMDNSRLHRASSCETYEYPTRGSGESASWSAESPGKTAVGRSDSASSDENYVPMNPGSSTLLAMERAGDNSQSAYIPMGPGPHHFDPLGYPSTALPIHRGPSRGSEIQPPPVNRNLKPDRKAKPTPLDLRNNTVIDELPFKSPVTKSWSRINHTFNSSSSQYCRPISTQSITSTDSGDSEENYVPMQNPVSASPVPSGTNSPAPRKSTGSVDYLALDFQPGSPSPHRKPSTSSVTSDEKVDYVQVDKEKTQALQNTMQEWTDVRQSSEPSKGAKL.

Ser2 bears the Phosphoserine mark. The 112-residue stretch at Asp8–Gly119 folds into the PH domain. The tract at residues Arg131–Pro183 is disordered. A phosphoserine mark is found at Ser135, Ser142, Ser143, Ser149, Ser150, Ser160, Ser165, Ser211, Ser220, and Ser261. Polar residues predominate over residues Ser160–Leu170. Thr262 is subject to Phosphothreonine. Residue Tyr263 is modified to Phosphotyrosine. At Thr275 the chain carries Phosphothreonine. Ser278 and Ser282 each carry phosphoserine. Phosphothreonine is present on Thr284. The residue at position 290 (Tyr290) is a Phosphotyrosine. Thr328 bears the Phosphothreonine mark. Disordered stretches follow at residues Thr340 to Val442 and Pro491 to Leu517. The SH3-binding motif lies at Pro348–Pro355. A Phosphoserine modification is found at Ser365. Residues Thr382 and Thr388 each carry the phosphothreonine modification. Phosphoserine is present on Ser402. Thr405 bears the Phosphothreonine mark. Low complexity predominate over residues Gly412–Ser423. Ser420 and Ser423 each carry phosphoserine. Tyr441 carries the post-translational modification Phosphotyrosine. An SH3-binding motif is present at residues Pro499–Pro508. Residue Ser532 is modified to Phosphoserine. Composition is skewed to polar residues over residues Ser548–Ser566 and Asn578–Ser600. The disordered stretch occupies residues Ser548–Asp631. At Ser612 the chain carries Phosphoserine. A Phosphotyrosine modification is found at Tyr632. A compositionally biased stretch (polar residues) spans Thr646–Pro659. The tract at residues Thr646 to Leu665 is disordered.

This sequence belongs to the GAB family. Part of a complex composed of EEIG1, TNFRSF11A/RANK, PLCG2, GAB2, TEC and BTK; complex formation increases in the presence of TNFSF11/RANKL. Interacts with HCK. Interacts with SHC1; may mediate interaction with receptors. Interacts with SYK. Interacts with PI-3 kinase. Interacts with GRB2 (via SH3 2 domain). Interacts (phosphorylated) with PTPN11. Interacts with TNFRSF11A (via cytoplasmic domain). Interacts (phosphorylated) with 14-3-3 family proteins SFN, YWHAB, YWHAE, YWHAG, YWHAH, YWHAQ and YWHAZ; prevents interaction with GRB2 and attenuates GAB2 signaling. In terms of processing, phosphorylated upon EGF stimulation. Phosphorylated on tyrosine residues by HCK upon IL6 signaling. Phosphorylated on tyrosine residue(s) by the thrombopoietin receptor (TPOR), stem cell factor receptor (SCFR), and T-cell and B-cell antigen receptors, gp130, IL-2R and IL-3R. Phosphorylated upon stimulation of TNFRSF11A/RANK by TNFSF11/RANKL. Dephosphorylated by PTPN11.

The protein resides in the cytoplasm. The protein localises to the cell membrane. It is found in the membrane raft. Functionally, adapter protein which acts downstream of several membrane receptors including cytokine, antigen, hormone, cell matrix and growth factor receptors to regulate multiple signaling pathways. Regulates osteoclast differentiation mediating the TNFRSF11A/RANK signaling. In allergic response, it plays a role in mast cells activation and degranulation through PI-3-kinase regulation. Also involved in the regulation of cell proliferation and hematopoiesis. This chain is GRB2-associated-binding protein 2 (Gab2), found in Rattus norvegicus (Rat).